The chain runs to 405 residues: Deoxyguanosinetriphosphate triphosphohydrolase-like protein (405 aa).

One can recognise an HD domain in the interval 75–219; the sequence is RLTHTIEVAQ…AAIADDIAYN (145 aa).

This sequence belongs to the dGTPase family. Type 2 subfamily.

In Rhizobium johnstonii (strain DSM 114642 / LMG 32736 / 3841) (Rhizobium leguminosarum bv. viciae), this protein is Deoxyguanosinetriphosphate triphosphohydrolase-like protein.